The primary structure comprises 548 residues: Copine-2 (548 aa).

C2 domains are found at residues 6 to 131 and 138 to 263; these read DGGA…TRPL and PAGK…PLEI. Ca(2+) contacts are provided by Asp-39, Asp-45, Asp-97, Asp-99, Ser-102, Asp-109, Asp-170, Asp-176, Asp-232, Asp-234, and Asp-240. A linker region region spans residues 247 to 304; sequence TSVLQMSEARDGVPLEIECINPKKQRKKKSYKNSGIIILRSCKIHRNYSFLDYILGGC. The VWFA domain maps to 305–507; that stretch reads QLMFTVGIDF…AARDIVQFVP (203 aa).

It belongs to the copine family. The cofactor is Ca(2+).

The protein resides in the cytoplasm. The protein localises to the nucleus. It is found in the cell membrane. Calcium-dependent phospholipid-binding protein that plays a role in calcium-mediated intracellular processes. Exhibits calcium-dependent cell membrane binding properties. The protein is Copine-2 of Mus musculus (Mouse).